We begin with the raw amino-acid sequence, 476 residues long: Acyl-lipid omega-13 desaturase (476 aa).

In terms of domain architecture, Cytochrome b5 heme-binding spans 10–75 (GPALPSIPHQ…HLRVLERFRV (66 aa)). Heme-binding residues include His37 and His60. 2 consecutive transmembrane segments (helical) span residues 146–166 (PFVILHCLHVVGLIWSMKLWW) and 168–188 (GAFISAFILPYFLWVLCAAMV). A Histidine box-1 motif is present at residues 189 to 193 (HDGGH). The Histidine box-2 signature appears at 224 to 229 (HNILHH). 3 helical membrane passes run 267 to 287 (FFSHLIMYNFAHIGLTMISPL), 315 to 335 (YHSTVMLQLVTVGAFYITPFL), and 343 to 363 (LLLTLLPTFMMSVAFMVIAQV). A Histidine box-3 motif is present at residues 410–414 (QSLHH).

This sequence belongs to the fatty acid desaturase type 1 family.

The protein resides in the membrane. The enzyme catalyses a (9Z,12Z)-octadecadienoyl-containing glycerolipid + 2 Fe(II)-[cytochrome b5] + O2 + 2 H(+) = a (5Z,9Z,12Z)-octadecatrienoyl-containing glycerolipid + 2 Fe(III)-[cytochrome b5] + 2 H2O. It carries out the reaction (9Z,12Z,15Z)-octadecatrienoyl-containing glycerolipid + 2 Fe(II)-[cytochrome b5] + O2 + 2 H(+) = a (5Z,9Z,12Z,15Z)-octadecatetraenoyl-containing glycerolipid + 2 Fe(III)-[cytochrome b5] + 2 H2O. It functions in the pathway lipid metabolism; polyunsaturated fatty acid biosynthesis. In terms of biological role, front-end desaturase having a omega-13 desaturase activity for omega-9 unsaturated C18/C20 fatty acids. Strong substrate preferences for linoleic acid and alpha-linolenic acid for the production of pinolenic and coniferonic acids respectively. No desaturase activity for dihomo gamma-linolenic acid and eicosatertraenoic acid. In Chlamydomonas reinhardtii (Chlamydomonas smithii), this protein is Acyl-lipid omega-13 desaturase.